The following is a 101-amino-acid chain: Small ribosomal subunit protein uS10 (101 aa).

The protein belongs to the universal ribosomal protein uS10 family. Part of the 30S ribosomal subunit.

Functionally, involved in the binding of tRNA to the ribosomes. The polypeptide is Small ribosomal subunit protein uS10 (Christiangramia forsetii (strain DSM 17595 / CGMCC 1.15422 / KT0803) (Gramella forsetii)).